Consider the following 110-residue polypeptide: Putative anti-sigma factor antagonist TM_1442 (110 aa).

In terms of domain architecture, STAS spans leucine 4–alanine 110. Serine 59 is modified (phosphoserine).

Belongs to the anti-sigma-factor antagonist family. Phosphorylated on a serine residue.

Functionally, in the phosphorylated form it could act as an anti-anti-sigma factor that counteracts an anti-sigma factor and thus releases a sigma factor from inhibition. The sequence is that of Putative anti-sigma factor antagonist TM_1442 from Thermotoga maritima (strain ATCC 43589 / DSM 3109 / JCM 10099 / NBRC 100826 / MSB8).